The sequence spans 144 residues: Large ribosomal subunit protein uL11 (144 aa).

Belongs to the universal ribosomal protein uL11 family. Part of the ribosomal stalk of the 50S ribosomal subunit. Interacts with L10 and the large rRNA to form the base of the stalk. L10 forms an elongated spine to which L12 dimers bind in a sequential fashion forming a multimeric L10(L12)X complex. Contacts the CTC protein (RL25). In terms of processing, one or more lysine residues are methylated.

Functionally, forms part of the ribosomal stalk which helps the ribosome interact with GTP-bound translation factors. The polypeptide is Large ribosomal subunit protein uL11 (Deinococcus radiodurans (strain ATCC 13939 / DSM 20539 / JCM 16871 / CCUG 27074 / LMG 4051 / NBRC 15346 / NCIMB 9279 / VKM B-1422 / R1)).